Reading from the N-terminus, the 132-residue chain is NADH-quinone oxidoreductase subunit A (132 aa).

3 consecutive transmembrane segments (helical) span residues 7 to 27 (YWVL…MIGV), 62 to 82 (FYLI…LYAW), and 91 to 111 (WTGY…LAYL).

The protein belongs to the complex I subunit 3 family. In terms of assembly, NDH-1 is composed of 14 different subunits. Subunits NuoA, H, J, K, L, M, N constitute the membrane sector of the complex.

Its subcellular location is the cell inner membrane. The catalysed reaction is a quinone + NADH + 5 H(+)(in) = a quinol + NAD(+) + 4 H(+)(out). NDH-1 shuttles electrons from NADH, via FMN and iron-sulfur (Fe-S) centers, to quinones in the respiratory chain. The immediate electron acceptor for the enzyme in this species is believed to be ubiquinone. Couples the redox reaction to proton translocation (for every two electrons transferred, four hydrogen ions are translocated across the cytoplasmic membrane), and thus conserves the redox energy in a proton gradient. This Acidiphilium cryptum (strain JF-5) protein is NADH-quinone oxidoreductase subunit A.